Consider the following 508-residue polypeptide: Photosystem II CP47 reaction center protein (508 aa).

6 helical membrane passes run 21-36, 101-115, 140-156, 203-218, 237-252, and 457-472; these read AVHI…WAGS, IVFS…IWHW, GIHL…FGTF, IAAG…FHLS, VLSS…AFVV, and SFAL…HGAR.

This sequence belongs to the PsbB/PsbC family. PsbB subfamily. As to quaternary structure, PSII is composed of 1 copy each of membrane proteins PsbA, PsbB, PsbC, PsbD, PsbE, PsbF, PsbH, PsbI, PsbJ, PsbK, PsbL, PsbM, PsbT, PsbX, PsbY, PsbZ, Psb30/Ycf12, at least 3 peripheral proteins of the oxygen-evolving complex and a large number of cofactors. It forms dimeric complexes. Binds multiple chlorophylls. PSII binds additional chlorophylls, carotenoids and specific lipids. serves as cofactor.

Its subcellular location is the plastid. It localises to the chloroplast thylakoid membrane. Functionally, one of the components of the core complex of photosystem II (PSII). It binds chlorophyll and helps catalyze the primary light-induced photochemical processes of PSII. PSII is a light-driven water:plastoquinone oxidoreductase, using light energy to abstract electrons from H(2)O, generating O(2) and a proton gradient subsequently used for ATP formation. This is Photosystem II CP47 reaction center protein from Citrus sinensis (Sweet orange).